A 124-amino-acid chain; its full sequence is UPF0102 protein tll1737 (124 aa).

It belongs to the UPF0102 family.

The protein is UPF0102 protein tll1737 of Thermosynechococcus vestitus (strain NIES-2133 / IAM M-273 / BP-1).